The following is a 678-amino-acid chain: MDVPSSSSSRFSVGSASPSSVLLYAKDLKKWDEFEDLLEERRHISDFKFAMKCYTPPLYRGITPCKPGDIKSIVLSSEEINYVIKQLSRESLTGVDVLREEASEILEEMSHKLRIGAIRFFAFVLSKIFKQIFSKVCVNEEGIQKLQRAVQEHPVVLLPSHRSYIDFLMLSFILYSYDLPVPVIAAGMDFLGMRVVSELLRMSGAFFMRRTFGGNKLYWAVFSEYVKTMLRCGYAPVEFFLEGTRSRAAKTLTPKFGLLNIVMEPFFKREVFDTYFVPISISYDKILEESLYAYEILGVPKPKESTTGLLKARRILSENFGSIHVYFGDPVSLRSLAAGRLNRNTYNLVPRCIPQKQPEDVQAFVTEVAYKMQLLQIENLALSPWLLVVTILLQNQLSMDFDALVEKTLWLKGVTQVFGGFLLWPDNKLPEEVVQSSILLHSNLASLVKDQVVLKMNSGSSQVVNGLVPEHIALLMCSAYRNQLLNIFARPSLVALALHMTPGLRKEDVFSCFSFLRNVFSDEFIFLPGNTLRDFEEGCYLLCKAEAMQMAGKDIILTDKGTAVLQFLTSLFKPFVESYQLLCRYLLHEEDYFGEKEYLVAARKFTRQLLDQGSSQCYDALSSELQKNALAAFVRLGVVEKKKVDSKYVYYVNGPATSKLEEMLGCKKPIGKPATAKL.

A phosphoserine mark is found at S12 and S17. Residues H161–D166 carry the HXXXXD motif motif. K641 carries the post-translational modification N6-acetyllysine. The short motif at A676–L678 is the Microbody targeting signal element.

Belongs to the GPAT/DAPAT family. As to quaternary structure, part of a heterotrimeric complex composed of GNPAT, AGPS and a modified form of GNPAT. As to expression, highly expressed in liver and testis. Lower levels in heart, brain, lung and kidney. Detected in spleen.

The protein localises to the peroxisome membrane. The enzyme catalyses dihydroxyacetone phosphate + an acyl-CoA = a 1-acylglycerone 3-phosphate + CoA. It catalyses the reaction dihydroxyacetone phosphate + hexadecanoyl-CoA = 1-hexadecanoylglycerone 3-phosphate + CoA. Its pathway is membrane lipid metabolism; glycerophospholipid metabolism. Dihydroxyacetonephosphate acyltransferase catalyzing the first step in the biosynthesis of plasmalogens, a subset of phospholipids that differ from other glycerolipids by having an alkyl chain attached through a vinyl ether linkage at the sn-1 position of the glycerol backbone, and which unique physical properties have an impact on various aspects of cell signaling and membrane biology. The protein is Dihydroxyacetone phosphate acyltransferase of Mus musculus (Mouse).